The primary structure comprises 154 residues: Large ribosomal subunit protein uL13 (154 aa).

This sequence belongs to the universal ribosomal protein uL13 family. Part of the 50S ribosomal subunit.

This protein is one of the early assembly proteins of the 50S ribosomal subunit, although it is not seen to bind rRNA by itself. It is important during the early stages of 50S assembly. The sequence is that of Large ribosomal subunit protein uL13 from Brucella anthropi (strain ATCC 49188 / DSM 6882 / CCUG 24695 / JCM 21032 / LMG 3331 / NBRC 15819 / NCTC 12168 / Alc 37) (Ochrobactrum anthropi).